The chain runs to 77 residues: Conotoxin Vc6c (77 aa).

An N-terminal signal peptide occupies residues 1 to 22; that stretch reads MKLTCMVIVAVLFLTANTFVTA. The propeptide occupies 23-51; it reads DDSGNGLENLFSKAHHEIKNPEASNLNKR. Disulfide bonds link Cys-52–Cys-67, Cys-59–Cys-71, and Cys-66–Cys-76.

In terms of tissue distribution, expressed by the venom duct.

The protein resides in the secreted. This chain is Conotoxin Vc6c, found in Conus victoriae (Queen Victoria cone).